The chain runs to 650 residues: Sterol O-acyltransferase 2 (650 aa).

Residues 41-79 (LTSSNNSCASEHEGEGEGEDERPATTSSAPTQNHSAGDV) form a disordered region. Residues 64–75 (ATTSSAPTQNHS) are compositionally biased toward polar residues. Transmembrane regions (helical) follow at residues 223-243 (FSGL…KALI), 300-320 (TGWA…MYLT), 412-432 (INVS…QIEY), 450-470 (IFGT…PVAM), and 493-513 (LLVD…YLIW). The FYXDWWN motif signature appears at 531–537 (FYGDWWN). 2 helical membrane passes run 575–595 (ATLM…YVIF) and 630–650 (VIFW…YLTF). His-587 is an active-site residue.

This sequence belongs to the membrane-bound acyltransferase family. Sterol o-acyltransferase subfamily.

The protein resides in the endoplasmic reticulum membrane. In terms of biological role, sterol O-acyltransferase that catalyzes the formation of stery esters. The chain is Sterol O-acyltransferase 2 (ARE2) from Saccharomyces uvarum (strain ATCC 76518 / CBS 7001 / CLIB 283 / NBRC 10550 / MCYC 623 / NCYC 2669 / NRRL Y-11845) (Yeast).